A 247-amino-acid chain; its full sequence is ATP synthase subunit a, chloroplastic (247 aa).

5 helical membrane passes run 38–58 (QVLITSWVVIAILLGSAAIAV), 95–115 (VPFIGTMFLFIFVSNWSGALL), 134–154 (INTTVALALLTSAAYFYAGLT), 199–219 (LVVVVLVSLVPLVVPIPVMFL), and 220–240 (GLFTSGIQALIFATLAAAYIG).

It belongs to the ATPase A chain family. As to quaternary structure, F-type ATPases have 2 components, CF(1) - the catalytic core - and CF(0) - the membrane proton channel. CF(1) has five subunits: alpha(3), beta(3), gamma(1), delta(1), epsilon(1). CF(0) has four main subunits: a, b, b' and c.

It localises to the plastid. Its subcellular location is the chloroplast thylakoid membrane. Functionally, key component of the proton channel; it plays a direct role in the translocation of protons across the membrane. The sequence is that of ATP synthase subunit a, chloroplastic from Ceratophyllum demersum (Rigid hornwort).